A 101-amino-acid chain; its full sequence is NAD(P)H-quinone oxidoreductase subunit 4L, chloroplastic (101 aa).

3 consecutive transmembrane segments (helical) span residues 2 to 22, 32 to 52, and 61 to 81; these read LLEHVLVLSAYLFSIGIYGLI, MCLELILNAVNMNFVTFSDFF, and IFSIFVIAIAAAEAAIGSAIV.

This sequence belongs to the complex I subunit 4L family. NDH is composed of at least 16 different subunits, 5 of which are encoded in the nucleus.

It localises to the plastid. Its subcellular location is the chloroplast thylakoid membrane. The catalysed reaction is a plastoquinone + NADH + (n+1) H(+)(in) = a plastoquinol + NAD(+) + n H(+)(out). The enzyme catalyses a plastoquinone + NADPH + (n+1) H(+)(in) = a plastoquinol + NADP(+) + n H(+)(out). Its function is as follows. NDH shuttles electrons from NAD(P)H:plastoquinone, via FMN and iron-sulfur (Fe-S) centers, to quinones in the photosynthetic chain and possibly in a chloroplast respiratory chain. The immediate electron acceptor for the enzyme in this species is believed to be plastoquinone. Couples the redox reaction to proton translocation, and thus conserves the redox energy in a proton gradient. The chain is NAD(P)H-quinone oxidoreductase subunit 4L, chloroplastic from Carica papaya (Papaya).